Here is a 9439-residue protein sequence, read N- to C-terminus: Extracellular matrix-binding protein ebh (9439 aa).

29 FIVAR domains span residues Ala-1815 to Ala-1871, Ala-1901 to Ala-1957, Ala-1985 to Ala-2041, Ala-2071 to Glu-2127, Ala-2155 to Ala-2211, Ala-2241 to Glu-2297, Ala-2325 to Ala-2381, Ala-2411 to Asn-2467, Asp-2488 to Ala-2551, Ala-2581 to Ile-2638, Ala-2665 to Asn-2720, Ala-2748 to Glu-2804, Ala-2832 to Ala-2888, Ala-2918 to Ala-2974, Ala-3002 to Ala-3058, Ala-3088 to Glu-3144, Ala-3172 to Ala-3228, Ala-3258 to Glu-3314, Asp-3335 to Ala-3398, Ala-3428 to Glu-3484, Ala-3512 to Asn-3567, Ile-3595 to Ser-3650, Ala-3678 to Asn-3733, Ser-3802 to Lys-3860, Ala-3928 to Ala-3983, Ala-4056 to Lys-4114, Ser-4182 to Ala-4240, Ala-4308 to Lys-4365, and Val-4433 to Ala-4491. Positions Glu-2495–Asn-2507 are enriched in basic and acidic residues. Residues Glu-2495–Ser-2514 form a disordered region. The span at Ala-2925–Gln-2938 shows a compositional bias: polar residues. The disordered stretch occupies residues Ala-2925 to Gln-2951. Residues Leu-4522–Thr-4542 are disordered. An FIVAR 30 domain is found at Ser-4559 to Thr-4617. The tract at residues Leu-4648–Glu-4671 is disordered. FIVAR domains are found at residues Ala-4685–Lys-4743, Ala-4811–Ala-4869, Ala-4937–Ala-4995, Ala-5063–Lys-5115, Ala-5189–Leu-5246, Leu-5314–Ala-5372, Ala-5440–Ala-5498, Ala-5566–Ala-5624, Ala-5692–Thr-5750, Asp-5818–Leu-5875, Ala-5943–Ala-6000, Lys-6068–Thr-6126, Ala-6194–Ile-6252, and Glu-6320–Ala-6378. The span at Gln-5699–Phe-5712 shows a compositional bias: polar residues. The segment at Gln-5699–Lys-5719 is disordered. The interval Asn-6413–Ser-6434 is disordered. FIVAR domains follow at residues Ala-6446–Ala-6504, Ala-6572–Ala-6630, Ser-6698–Ala-6755, Thr-6823–Glu-6877, Ala-6949–Ile-7007, Ser-7075–Ala-7133, Asp-7201–Ala-7259, Ala-7327–Leu-7384, Ala-7452–Ala-7510, Ala-7578–Ile-7636, Ala-7704–Val-7762, Ala-7830–Ala-7888, Val-7956–Ala-8010, Ile-8078–Phe-8137, Ala-8205–Leu-8264, Ala-8332–Leu-8391, Lys-8459–Leu-8518, and Ala-8587–Ile-8643. The chain crosses the membrane as a helical span at residues Thr-9306–Ala-9324. 3 stretches are compositionally biased toward basic and acidic residues: residues Asp-9363–Ser-9375, Glu-9386–His-9395, and Gln-9404–Gln-9413. Positions Asp-9363–Lys-9439 are disordered. The span at Lys-9414–Lys-9439 shows a compositional bias: basic residues.

It localises to the cell membrane. The protein is Extracellular matrix-binding protein ebh (ebh) of Staphylococcus epidermidis (strain ATCC 35984 / DSM 28319 / BCRC 17069 / CCUG 31568 / BM 3577 / RP62A).